Reading from the N-terminus, the 338-residue chain is Aspartate carbamoyltransferase catalytic subunit (338 aa).

The carbamoyl phosphate site is built by R57 and T58. Residue K86 participates in L-aspartate binding. Carbamoyl phosphate contacts are provided by R107, H135, and Q138. L-aspartate contacts are provided by R172 and R234. L274 and P275 together coordinate carbamoyl phosphate.

This sequence belongs to the aspartate/ornithine carbamoyltransferase superfamily. ATCase family. As to quaternary structure, heterododecamer (2C3:3R2) of six catalytic PyrB chains organized as two trimers (C3), and six regulatory PyrI chains organized as three dimers (R2).

The enzyme catalyses carbamoyl phosphate + L-aspartate = N-carbamoyl-L-aspartate + phosphate + H(+). It participates in pyrimidine metabolism; UMP biosynthesis via de novo pathway; (S)-dihydroorotate from bicarbonate: step 2/3. Functionally, catalyzes the condensation of carbamoyl phosphate and aspartate to form carbamoyl aspartate and inorganic phosphate, the committed step in the de novo pyrimidine nucleotide biosynthesis pathway. The chain is Aspartate carbamoyltransferase catalytic subunit from Cellvibrio japonicus (strain Ueda107) (Pseudomonas fluorescens subsp. cellulosa).